We begin with the raw amino-acid sequence, 236 residues long: Glycosylphosphatidylinositol anchor biosynthesis protein 11 (236 aa).

2 helical membrane-spanning segments follow: residues 40–60 (TLTIPFHSALLIFGLYKFGLT) and 65–85 (GVMLKGIFSLIPLQLLYGYLI). N99 carries N-linked (GlcNAc...) asparagine glycosylation. A run of 4 helical transmembrane segments spans residues 107 to 127 (LLAGGIVISLVLSVPLFVALI), 139 to 159 (ETYLLSIHLSLLIFYPSLVLY), 184 to 204 (ILLSAVLAVIGTWFGVIPIPL), and 215 to 235 (ITLLTGAYIGSFVGGIACFLF).

This sequence belongs to the PIGF family.

The protein resides in the endoplasmic reticulum membrane. It functions in the pathway glycolipid biosynthesis; glycosylphosphatidylinositol-anchor biosynthesis. In terms of biological role, acts in the GPI biosynthetic pathway between GlcNAc-PI synthesis and GPI transfer to protein. This chain is Glycosylphosphatidylinositol anchor biosynthesis protein 11 (GPI11), found in Debaryomyces hansenii (strain ATCC 36239 / CBS 767 / BCRC 21394 / JCM 1990 / NBRC 0083 / IGC 2968) (Yeast).